Reading from the N-terminus, the 210-residue chain is Keratin-associated protein 26-1 (210 aa).

The protein belongs to the PMG family. As to quaternary structure, interacts with hair keratins. As to expression, localized high up in the well differentiated portion of the hair follicle cuticle (about 10-15 cell layers above the apex of the dermal papilla).

In the hair cortex, hair keratin intermediate filaments are embedded in an interfilamentous matrix, consisting of hair keratin-associated proteins (KRTAP), which are essential for the formation of a rigid and resistant hair shaft through their extensive disulfide bond cross-linking with abundant cysteine residues of hair keratins. The matrix proteins include the high-sulfur and high-glycine-tyrosine keratins. The protein is Keratin-associated protein 26-1 (KRTAP26-1) of Homo sapiens (Human).